The primary structure comprises 343 residues: 4-hydroxythreonine-4-phosphate dehydrogenase (343 aa).

Residues His141 and Thr142 each contribute to the substrate site. Residues His175, His220, and His275 each contribute to the a divalent metal cation site. Substrate-binding residues include Lys283, Asn292, and Arg301.

It belongs to the PdxA family. As to quaternary structure, homodimer. The cofactor is Zn(2+). Mg(2+) is required as a cofactor. It depends on Co(2+) as a cofactor.

The protein localises to the cytoplasm. It carries out the reaction 4-(phosphooxy)-L-threonine + NAD(+) = 3-amino-2-oxopropyl phosphate + CO2 + NADH. Its pathway is cofactor biosynthesis; pyridoxine 5'-phosphate biosynthesis; pyridoxine 5'-phosphate from D-erythrose 4-phosphate: step 4/5. In terms of biological role, catalyzes the NAD(P)-dependent oxidation of 4-(phosphooxy)-L-threonine (HTP) into 2-amino-3-oxo-4-(phosphooxy)butyric acid which spontaneously decarboxylates to form 3-amino-2-oxopropyl phosphate (AHAP). In Janthinobacterium sp. (strain Marseille) (Minibacterium massiliensis), this protein is 4-hydroxythreonine-4-phosphate dehydrogenase.